The primary structure comprises 276 residues: Glutamate 5-kinase (276 aa).

An ATP-binding site is contributed by Lys14. Substrate-binding residues include Ser54, Asp141, and Asn157. Residues 177–178 (SD) and 219–225 (TGGMLTK) each bind ATP.

This sequence belongs to the glutamate 5-kinase family.

Its subcellular location is the cytoplasm. It carries out the reaction L-glutamate + ATP = L-glutamyl 5-phosphate + ADP. The protein operates within amino-acid biosynthesis; L-proline biosynthesis; L-glutamate 5-semialdehyde from L-glutamate: step 1/2. Catalyzes the transfer of a phosphate group to glutamate to form L-glutamate 5-phosphate. The chain is Glutamate 5-kinase from Listeria welshimeri serovar 6b (strain ATCC 35897 / DSM 20650 / CCUG 15529 / CIP 8149 / NCTC 11857 / SLCC 5334 / V8).